Consider the following 309-residue polypeptide: Probable lipid kinase YegS-like (309 aa).

The DAGKc domain occupies 1-133; sequence MPLTHIRLLL…IDIIRANNNY (133 aa). ATP-binding positions include S39, 65-71, and T95; that span reads GDGSLNE. L214, D217, and L219 together coordinate Mg(2+). Residue E273 is the Proton acceptor of the active site.

This sequence belongs to the diacylglycerol/lipid kinase family. YegS lipid kinase subfamily. The cofactor is Mg(2+). Requires Ca(2+) as cofactor.

Its subcellular location is the cytoplasm. Its function is as follows. Probably phosphorylates lipids; the in vivo substrate is unknown. The sequence is that of Probable lipid kinase YegS-like from Shewanella frigidimarina (strain NCIMB 400).